Consider the following 641-residue polypeptide: Macrolide export ATP-binding/permease protein MacB (641 aa).

The 235-residue stretch at 2-236 (IFLKNICKNI…LTLKTMSKEK (235 aa)) folds into the ABC transporter domain. 34–41 (GQSGSGKT) is an ATP binding site. A run of 4 helical transmembrane segments spans residues 265–285 (ILTM…VALG), 519–539 (ACVA…IMLV), 571–591 (MICT…IFAF), and 604–624 (AYSV…FGFF).

This sequence belongs to the ABC transporter superfamily. Macrolide exporter (TC 3.A.1.122) family. In terms of assembly, homodimer.

Its subcellular location is the cell inner membrane. Its function is as follows. Non-canonical ABC transporter that contains transmembrane domains (TMD), which form a pore in the inner membrane, and an ATP-binding domain (NBD), which is responsible for energy generation. Confers resistance against macrolides. The protein is Macrolide export ATP-binding/permease protein MacB of Campylobacter jejuni subsp. jejuni serotype O:23/36 (strain 81-176).